The following is a 92-amino-acid chain: MKALGNISHVSNKGRIIARSDRTQQLGAPVFTSDGKRIGKVHDIFGPTRNPYISIKPSRAINPEKFENRVGETLYVGIKNVKKWGRRKRRRK.

This sequence to M.jannaschii MJ0782.1.

This is an uncharacterized protein from Methanothermobacter thermautotrophicus (strain ATCC 29096 / DSM 1053 / JCM 10044 / NBRC 100330 / Delta H) (Methanobacterium thermoautotrophicum).